A 2221-amino-acid polypeptide reads, in one-letter code: RNA-directed RNA polymerase L (2221 aa).

Residues 29–292 (KTVLLSQVNF…SERETLIEAE (264 aa)) form an endonuclease region. Residues Glu-54, Asp-91, and Glu-104 each contribute to the Mn(2+) site. Residue Lys-117 is part of the active site. In terms of domain architecture, RdRp catalytic spans 1171–1369 (LDMKSVVRLS…YLSSKLNKFI (199 aa)). A Mg(2+)-binding site is contributed by Asp-1327.

This sequence belongs to the Bunyavirales RNA polymerase family. In terms of assembly, homomultimer; the oligomeric structure is essential for the polymerase activity. Interacts with nucleoprotein N. Interacts with protein Z; this interaction inhibits viral transcription and replication, Z partially blocks the product exit tunnel for the releasing nascent RNA product. Mn(2+) is required as a cofactor. The cofactor is Mg(2+).

The protein localises to the virion. It is found in the host cytoplasm. The enzyme catalyses RNA(n) + a ribonucleoside 5'-triphosphate = RNA(n+1) + diphosphate. In terms of biological role, RNA-dependent RNA polymerase, which is responsible for the replication and transcription of the viral RNA genome using antigenomic RNA as an intermediate. During transcription, synthesizes subgenomic RNAs and assures their capping by a cap-snatching mechanism, which involves the endonuclease activity cleaving the host capped pre-mRNAs. These short capped RNAs are then used as primers for viral transcription. The 3'-end of subgenomic mRNAs molecules are heterogeneous and not polyadenylated. The replicase function is to direct synthesis of antigenomic and genomic RNA which are encapsidated and non capped. As a consequence of the use of the same enzyme for both transcription and replication, these mechanisms need to be well coordinated. These processes may be regulated by proteins N and Z in a dose-dependent manner. Z protein inhibits the viral polymerase L und thus the viral transcription and RNA synthesis. The sequence is that of RNA-directed RNA polymerase L from Sigmodon hispidus (Hispid cotton rat).